Here is a 1238-residue protein sequence, read N- to C-terminus: Receptor-type tyrosine-protein phosphatase eta (1238 aa).

The first 28 residues, 1-28 (MKPAARETRTPPRSPGLRWALLPLLLLL), serve as a signal peptide directing secretion. Residues 29–876 (RQGQVLCAGA…LPQDPGVICG (848 aa)) lie on the Extracellular side of the membrane. Positions 39–122 (APNPIFDIEA…LNKTITTEPW (84 aa)) constitute a Fibronectin type-III 1 domain. N-linked (GlcNAc...) asparagine glycans are attached at residues Asn62, Asn78, Asn85, Asn90, Asn110, Asn114, Asn145, Asn164, Asn173, Asn182, Asn198, Asn207, Asn244, Asn253, Asn267, Asn278, Asn313, Asn317, Asn333, Asn366, Asn379, Asn398, Asn403, Asn437, Asn452, Asn488, Asn506, Asn538, Asn572, Asn576, Asn662, Asn668, Asn685, Asn691, Asn725, Asn811, and Asn838. The region spanning 170–266 (PGTNNSFAFP…GQPRNKVFKT (97 aa)) is the Fibronectin type-III 2 domain. Fibronectin type-III domains lie at 270 to 358 (QVSD…SPDQ), 359 to 443 (VSDF…TDPS), 444 to 527 (AVTD…TQYT), 528 to 621 (RPSS…TEPE), 622 to 718 (PVTS…TDPP), and 717 to 803 (PPTP…SEVL). A helical membrane pass occupies residues 877 to 897 (AVFGCIFGALAITAVGGFIFW). The Cytoplasmic segment spans residues 898–1238 (RKKRTDAKNN…MFGKTNGYIA (341 aa)). The residue at position 910 (Ser910) is a Phosphoserine. One can recognise a Tyrosine-protein phosphatase domain in the interval 942 to 1199 (FAEEYEDLKL…VFLNQCVLDI (258 aa)). Substrate is bound by residues Asp1106, 1140–1146 (CSAGVGR), and Gln1184. Cys1140 serves as the catalytic Phosphocysteine intermediate.

Belongs to the protein-tyrosine phosphatase family. Receptor class 3 subfamily. In terms of assembly, monomer. Interacts with CTNNB1 (phosphorylated) and JUP (phosphorylated). Interacts with FLT3 (phosphorylated). Interacts with GAB1 and GRB2. As to expression, expressed at high levels in brain, kidney, spleen and intestine, and at lower levels in liver, lung, thymus and heart. Expressed at a high level in the myeloid cell line FDC-P2, and at a lower level in the pre-B lymphoid cell line WEHI-231 and the T hybridoma cell line HB21.7.31. Not expressed in the fibroblast cell line NIH3T3 or the erythroid cell line F5-5. Expressed in macrophages.

Its subcellular location is the cell membrane. The protein resides in the cell projection. It is found in the ruffle membrane. It localises to the cell junction. It carries out the reaction O-phospho-L-tyrosyl-[protein] + H2O = L-tyrosyl-[protein] + phosphate. Its function is as follows. Tyrosine phosphatase which dephosphorylates or contributes to the dephosphorylation of CTNND1, FLT3, PDGFRB, MET, KDR, LYN, SRC, MAPK1, MAPK3, EGFR, TJP1, OCLN, PIK3R1 and PIK3R2. Plays a role in cell adhesion, migration, proliferation and differentiation. Has a role in megakaryocytes and platelet formation. Involved in vascular development. May be involved in the mechanism of contact inhibition of cell growth. Regulator of macrophage adhesion and spreading. Positively affects cell-matrix adhesion. Positive regulator of platelet activation and thrombosis. Negative regulator of cell proliferation. Negative regulator of PDGF-stimulated cell migration; through dephosphorylation of PDGFR. Positive regulator of endothelial cell survival, as well as of VEGF-induced SRC and AKT activation; through KDR dephosphorylation. Negative regulator of EGFR signaling pathway; through EGFR dephosphorylation. Enhances the barrier function of epithelial junctions during reassembly. Negatively regulates T-cell receptor (TCR) signaling. Upon T-cell TCR activation, it is up-regulated and excluded from the immunological synapses, while upon T-cell-antigen presenting cells (APC) disengagement, it is no longer excluded and can dephosphorylate PLCG1 and LAT to down-regulate prolongation of signaling. The chain is Receptor-type tyrosine-protein phosphatase eta (Ptprj) from Mus musculus (Mouse).